Here is a 400-residue protein sequence, read N- to C-terminus: Phosphoglycerate kinase (400 aa).

Substrate is bound by residues Asp-22–Asn-24, Arg-38, His-61–Arg-64, Arg-120, and Arg-153. Residues Lys-206, Gly-297, Glu-328, and Gly-354 to Thr-357 contribute to the ATP site.

It belongs to the phosphoglycerate kinase family. As to quaternary structure, monomer.

It localises to the cytoplasm. It catalyses the reaction (2R)-3-phosphoglycerate + ATP = (2R)-3-phospho-glyceroyl phosphate + ADP. Its pathway is carbohydrate degradation; glycolysis; pyruvate from D-glyceraldehyde 3-phosphate: step 2/5. The sequence is that of Phosphoglycerate kinase from Campylobacter curvus (strain 525.92).